The following is a 765-amino-acid chain: Cyanobacterial phytochrome A (765 aa).

Residues 20–510 (IHLSGQIQPH…RKAIVNIVLR (491 aa)) are chromophore binding domain. One can recognise a GAF domain in the interval 152-320 (NLRDFCQIIV…VIFAEISARE (169 aa)). Cys259 contributes to the a tetrapyrrole binding site. In terms of domain architecture, Histidine kinase spans 535–748 (VASHDLQEPL…TFYFTIPVGG (214 aa)). Residue His538 is modified to Phosphohistidine; by autocatalysis.

This sequence in the N-terminal section; belongs to the phytochrome family. Contains one covalently linked tetrapyrrole chromophore.

The enzyme catalyses ATP + protein L-histidine = ADP + protein N-phospho-L-histidine.. Its function is as follows. Photoreceptor which exists in two forms that are reversibly interconvertible by light: the R form that absorbs maximally in the red region of the spectrum and the FR form that absorbs maximally in the far-red region. This is Cyanobacterial phytochrome A (aphA) from Nostoc sp. (strain PCC 7120 / SAG 25.82 / UTEX 2576).